The chain runs to 291 residues: Deaminated glutathione amidase (291 aa).

Positions 13 to 268 constitute a CN hydrolase domain; it reads KRIGLGQITS…NDIAFVDIDL (256 aa). E52 serves as the catalytic Proton acceptor. The Proton donor role is filled by K130. C172 acts as the Nucleophile in catalysis.

Belongs to the carbon-nitrogen hydrolase superfamily. NIT1/NIT2 family.

The catalysed reaction is N-(4-oxoglutaryl)-L-cysteinylglycine + H2O = L-cysteinylglycine + 2-oxoglutarate. Catalyzes the hydrolysis of the amide bond in N-(4-oxoglutarate)-L-cysteinylglycine (deaminated glutathione), a metabolite repair reaction to dispose of the harmful deaminated glutathione. This is Deaminated glutathione amidase (nit1-1) from Dictyostelium discoideum (Social amoeba).